We begin with the raw amino-acid sequence, 180 residues long: Large ribosomal subunit protein uL6 (180 aa).

The protein belongs to the universal ribosomal protein uL6 family. In terms of assembly, part of the 50S ribosomal subunit.

Functionally, this protein binds to the 23S rRNA, and is important in its secondary structure. It is located near the subunit interface in the base of the L7/L12 stalk, and near the tRNA binding site of the peptidyltransferase center. The polypeptide is Large ribosomal subunit protein uL6 (Clostridium tetani (strain Massachusetts / E88)).